The sequence spans 630 residues: tRNA uridine 5-carboxymethylaminomethyl modification enzyme MnmG (630 aa).

An FAD-binding site is contributed by 13 to 18; sequence GGGHAG. 273–287 is an NAD(+) binding site; the sequence is GPRYCPSIEDKVMRF.

This sequence belongs to the MnmG family. Homodimer. Heterotetramer of two MnmE and two MnmG subunits. FAD serves as cofactor.

The protein localises to the cytoplasm. Functionally, NAD-binding protein involved in the addition of a carboxymethylaminomethyl (cmnm) group at the wobble position (U34) of certain tRNAs, forming tRNA-cmnm(5)s(2)U34. This Actinobacillus pleuropneumoniae serotype 7 (strain AP76) protein is tRNA uridine 5-carboxymethylaminomethyl modification enzyme MnmG.